The following is a 620-amino-acid chain: Chaperone protein HscA homolog (620 aa).

Belongs to the heat shock protein 70 family.

Functionally, chaperone involved in the maturation of iron-sulfur cluster-containing proteins. Has a low intrinsic ATPase activity which is markedly stimulated by HscB. In Pseudomonas entomophila (strain L48), this protein is Chaperone protein HscA homolog.